The sequence spans 213 residues: Probable GTP-binding protein EngB (213 aa).

The region spanning 30–204 (EGFEVAFAGR…YTVLAGWMEL (175 aa)) is the EngB-type G domain. Residues 38 to 45 (GRSNAGKS), 64 to 68 (GRTQL), 82 to 85 (DLPG), 149 to 152 (TKAD), and 182 to 185 (LFSA) contribute to the GTP site. Mg(2+)-binding residues include serine 45 and threonine 66.

Belongs to the TRAFAC class TrmE-Era-EngA-EngB-Septin-like GTPase superfamily. EngB GTPase family. The cofactor is Mg(2+).

Functionally, necessary for normal cell division and for the maintenance of normal septation. The polypeptide is Probable GTP-binding protein EngB (Pseudomonas fluorescens (strain ATCC BAA-477 / NRRL B-23932 / Pf-5)).